The sequence spans 337 residues: D-alanine--D-alanine ligase (337 aa).

One can recognise an ATP-grasp domain in the interval 126–326; sequence KQIWISNGLS…YADLVLWLLS (201 aa). 152-207 provides a ligand contact to ATP; that stretch reads VKHLGLPLIVKPAHEGSSLGLTKVKSVEELPAAYQLAAGLDKKVIAETCIVGDELT. Mg(2+) is bound by residues aspartate 279, glutamate 293, and asparagine 295.

This sequence belongs to the D-alanine--D-alanine ligase family. Mg(2+) serves as cofactor. Mn(2+) is required as a cofactor.

The protein localises to the cytoplasm. The catalysed reaction is 2 D-alanine + ATP = D-alanyl-D-alanine + ADP + phosphate + H(+). It functions in the pathway cell wall biogenesis; peptidoglycan biosynthesis. Functionally, cell wall formation. This chain is D-alanine--D-alanine ligase, found in Polynucleobacter asymbioticus (strain DSM 18221 / CIP 109841 / QLW-P1DMWA-1) (Polynucleobacter necessarius subsp. asymbioticus).